We begin with the raw amino-acid sequence, 177 residues long: Transcriptional repressor NrdR (177 aa).

A zinc finger spans residues 3-34 (CPYCGGSETQVKDSRPSEDGAAIRRRRVCPDC). Positions 49 to 139 (VVVLKRSGKR…VYKNFREARD (91 aa)) constitute an ATP-cone domain. Positions 148–177 (SDGMPVPAAAPEAEGDPEPEASGRRRAGRP) are disordered.

Belongs to the NrdR family. Zn(2+) serves as cofactor.

Negatively regulates transcription of bacterial ribonucleotide reductase nrd genes and operons by binding to NrdR-boxes. The chain is Transcriptional repressor NrdR from Methylobacterium radiotolerans (strain ATCC 27329 / DSM 1819 / JCM 2831 / NBRC 15690 / NCIMB 10815 / 0-1).